The chain runs to 1790 residues: E3 ubiquitin-protein ligase RBBP6 (1790 aa).

In terms of domain architecture, DWNN spans 4 to 76 (VHYKFSSKLN…NSSVIVRRIP (73 aa)). Residue Lys-130 is modified to N6-acetyllysine. The CCHC-type zinc finger occupies 160–177 (YTCFRCGKPGHYIKNCPT). A phosphoserine mark is found at Ser-245, Ser-246, Ser-247, and Ser-248. Residues 260 to 301 (CLICKDIMTDAVVIPCCGNSYCDECIRTALLESDEHTCPTCH) form an RING-type; degenerate zinc finger. The tract at residues 329–353 (YTKRLRKQLPPPPPPVPPPRPLMQR) is disordered. Over residues 337-349 (LPPPPPPVPPPRP) the composition is skewed to pro residues. Ser-361 bears the Phosphoserine mark. Residues 374–408 (VTSSSAHSAPSISSLTSNPSALAPSVSGNPSSAPA) are disordered. Positions 376–390 (SSSAHSAPSISSLTS) are enriched in low complexity. A Phosphoserine modification is found at Ser-517. Disordered regions lie at residues 533 to 599 (INRG…AGYS), 622 to 641 (QTAH…SREE), 648 to 667 (RLKE…NDFA), and 675 to 797 (KIQK…REYF). Residues 558–599 (VPVPPPPLYPPPPHTLPLPPGVPPPQFSPQFPPGQPPPAGYS) are compositionally biased toward pro residues. Residues 622–635 (QTAHSNTIPTTQAP) are compositionally biased toward polar residues. Positions 686 to 720 (RSKSPYSGSSYSRSSYTYSKSRSGSTRSRSYSRSF) are enriched in low complexity. Over residues 736–771 (RRGRGKSRNYRSRSRSHGYHRSRSRSPPYRRYHSRS) the composition is skewed to basic residues. Phosphoserine occurs at positions 769, 771, 773, 781, 816, 862, and 874. 2 disordered regions span residues 850 to 1292 (AQPR…TKRT) and 1322 to 1790 (WDKD…SVTV). Residues 903–923 (LSTRDSHNAKDNPKSKEKESE) are compositionally biased toward basic and acidic residues. A compositionally biased stretch (basic residues) spans 932 to 941 (NKHKKHRKRR). Basic and acidic residues-rich tracts occupy residues 956 to 972 (ETSR…ETKT), 980 to 991 (SRDDATPVRDEP), 1002 to 1018 (VSDK…VKSD), 1042 to 1072 (PQEK…KIDS), and 1096 to 1161 (SAKE…KDFE). At Ser-958 the chain carries Phosphoserine. The interaction with RB1 stretch occupies residues 983-1139 (DATPVRDEPM…KAKKPEKNKL (157 aa)). Thr-985 carries the post-translational modification Phosphothreonine. Residues Lys-1107 and Lys-1169 each participate in a glycyl lysine isopeptide (Lys-Gly) (interchain with G-Cter in SUMO2) cross-link. Ser-1179 carries the post-translational modification Phosphoserine. Basic and acidic residues-rich tracts occupy residues 1182–1200 (RKME…KDKI) and 1231–1249 (EPSE…EKVK). Residues 1260–1277 (EGSSSTLVDYTSTSSTGG) show a composition bias toward polar residues. Thr-1272 is subject to Phosphothreonine. Ser-1278 is subject to Phosphoserine. Positions 1281–1291 (RKSEEKTDTKR) are enriched in basic and acidic residues. Ser-1329, Ser-1342, and Ser-1348 each carry phosphoserine. The span at 1336–1358 (TTQPIQSVGKPSSIIKNVTTKPS) shows a compositional bias: polar residues. Basic and acidic residues-rich tracts occupy residues 1363–1392 (YTEK…ELRS), 1400–1440 (EKGR…EQGH), 1449–1460 (KETRTSEKHESV), 1469–1507 (TPGR…RGKE), and 1515–1580 (KLRE…RNGK). The tract at residues 1434–1544 (RLSEQGHFKT…SPPRDKKPHD (111 aa)) is interaction with p53. Thr-1469 is subject to Phosphothreonine. Residues 1618 to 1627 (LSHSSRLSSD) are compositionally biased toward polar residues. Residues 1634–1646 (EAAFEPDYNESDS) show a composition bias toward acidic residues. Phosphoserine occurs at positions 1646, 1648, and 1651. The segment covering 1663-1675 (KDLKEKTTEKAKE) has biased composition (basic and acidic residues). A compositionally biased stretch (low complexity) spans 1689 to 1724 (RSQSQSSPSVSPSRSHSPSGSQTRSHSSSASSAGSQ). Basic residues predominate over residues 1727-1750 (KKKKKKKEKKKHKKHKKHKKHKKH). The span at 1751 to 1760 (AGADGDVEKS) shows a compositional bias: basic and acidic residues. Residues 1761–1773 (QKHKHKKKKAKKN) show a composition bias toward basic residues. Over residues 1774–1790 (KDKEKEKDDQKVRSVTV) the composition is skewed to basic and acidic residues.

Interacts with MDM2 and YBX1. Also interacts with p53/TP53 and RB1. Interacts with NEK6. Interacts with ZBTB38. In terms of processing, phosphorylated by NEK6. Highly expressed in testis. Expressed at lower levels in brain, heart, kidney, liver, lung, skeletal muscle, spleen, thymus and tongue.

It localises to the nucleus. The protein localises to the nucleolus. The protein resides in the chromosome. Its subcellular location is the cytoplasm. It is found in the cytoskeleton. It localises to the microtubule organizing center. The protein localises to the centrosome. It carries out the reaction S-ubiquitinyl-[E2 ubiquitin-conjugating enzyme]-L-cysteine + [acceptor protein]-L-lysine = [E2 ubiquitin-conjugating enzyme]-L-cysteine + N(6)-ubiquitinyl-[acceptor protein]-L-lysine.. Its pathway is protein modification; protein ubiquitination. E3 ubiquitin-protein ligase which promotes ubiquitination of YBX1, leading to its degradation by the proteasome. May play a role as a scaffold protein to promote the assembly of the p53/TP53-MDM2 complex, resulting in increase of MDM2-mediated ubiquitination and degradation of p53/TP53; may function as negative regulator of p53/TP53, leading to both apoptosis and cell growth retardation. Regulates DNA-replication and common fragile sites (CFS) stability in a ZBTB38- and MCM10-dependent manner. Controls ZBTB38 protein stability and abundance via ubiquitination and proteasomal degradation, and ZBTB38 in turn negatively regulates the expression of MCM10 which plays an important role in DNA-replication. In Mus musculus (Mouse), this protein is E3 ubiquitin-protein ligase RBBP6 (Rbbp6).